Consider the following 275-residue polypeptide: Centromere protein V (275 aa).

2 stretches are compositionally biased toward low complexity: residues 1–10 and 17–51; these read MRRSRSSAAA and RSGASGASAAPAASAAAALAPSATRTRRSASQAGS. The interval 1–109 is disordered; the sequence is MRRSRSSAAA…ATPTSSASNL (109 aa). Serine 18 and serine 21 each carry phosphoserine. Arginine 43 is modified (omega-N-methylarginine). The segment covering 79-100 has biased composition (pro residues); sequence GEPPPPELALLPPPPPPPPTPA. Residues threonine 98, threonine 101, and threonine 103 each carry the phosphothreonine modification. One can recognise a CENP-V/GFA domain in the interval 148–260; sequence HTGGCHCGAV…TEEFNGSDWE (113 aa). Residues cysteine 152, cysteine 154, cysteine 172, cysteine 174, cysteine 177, cysteine 216, and cysteine 219 each contribute to the Zn(2+) site. Serine 257 carries the post-translational modification Phosphoserine.

Belongs to the Gfa family. It depends on Zn(2+) as a cofactor.

It is found in the chromosome. It localises to the centromere. The protein resides in the kinetochore. Its subcellular location is the nucleus. The protein localises to the cytoplasm. It is found in the cytoskeleton. It localises to the spindle. Functionally, required for distribution of pericentromeric heterochromatin in interphase nuclei and for centromere formation and organization, chromosome alignment and cytokinesis. The sequence is that of Centromere protein V (CENPV) from Homo sapiens (Human).